The sequence spans 1409 residues: DNA-directed RNA polymerase subunit beta' (1409 aa).

Zn(2+) contacts are provided by Cys-70, Cys-72, Cys-85, and Cys-88. Residues Asp-460, Asp-462, and Asp-464 each coordinate Mg(2+). Zn(2+)-binding residues include Cys-822, Cys-896, Cys-903, and Cys-906.

The protein belongs to the RNA polymerase beta' chain family. In terms of assembly, the RNAP catalytic core consists of 2 alpha, 1 beta, 1 beta' and 1 omega subunit. When a sigma factor is associated with the core the holoenzyme is formed, which can initiate transcription. Mg(2+) serves as cofactor. Zn(2+) is required as a cofactor.

It carries out the reaction RNA(n) + a ribonucleoside 5'-triphosphate = RNA(n+1) + diphosphate. DNA-dependent RNA polymerase catalyzes the transcription of DNA into RNA using the four ribonucleoside triphosphates as substrates. The chain is DNA-directed RNA polymerase subunit beta' from Methylobacillus flagellatus (strain ATCC 51484 / DSM 6875 / VKM B-1610 / KT).